Consider the following 173-residue polypeptide: uncharacterized protein (173 aa).

3 helical membrane-spanning segments follow: residues 24-44 (VAFI…WLFF), 82-102 (YILF…SYFI), and 135-155 (LIKR…ILFS).

The protein localises to the cell membrane. This is an uncharacterized protein from Rickettsia prowazekii (strain Madrid E).